A 223-amino-acid chain; its full sequence is Probable amino-acid ABC transporter permease protein PatM (223 aa).

Residues 19–210 (LGTTMEMATW…GVVVILTRVQ (192 aa)) form the ABC transmembrane type-1 domain. 5 consecutive transmembrane segments (helical) span residues 23-43 (MEMATWGLVFSLILSVILANI), 59-78 (ISFFRGTPLLVQLFLLYYGL), 90-110 (AFSAAVIGLTLHFAAYMAESI), 156-176 (FIDMIKSTSLAFTLGVAEIMA), and 186-206 (FRFFEAFLAVALIYWGVVVIL).

This sequence belongs to the binding-protein-dependent transport system permease family. HisMQ subfamily.

Its subcellular location is the cell inner membrane. Its function is as follows. Probably part of a binding-protein-dependent transport system for an amino acid. Probably responsible for the translocation of the substrate across the membrane. In Vibrio harveyi (Beneckea harveyi), this protein is Probable amino-acid ABC transporter permease protein PatM (patM).